Consider the following 396-residue polypeptide: NADH-quinone oxidoreductase subunit D (396 aa).

The protein belongs to the complex I 49 kDa subunit family. NDH-1 is composed of 14 different subunits. Subunits NuoB, C, D, E, F, and G constitute the peripheral sector of the complex.

Its subcellular location is the cell inner membrane. The catalysed reaction is a quinone + NADH + 5 H(+)(in) = a quinol + NAD(+) + 4 H(+)(out). NDH-1 shuttles electrons from NADH, via FMN and iron-sulfur (Fe-S) centers, to quinones in the respiratory chain. The immediate electron acceptor for the enzyme in this species is believed to be ubiquinone. Couples the redox reaction to proton translocation (for every two electrons transferred, four hydrogen ions are translocated across the cytoplasmic membrane), and thus conserves the redox energy in a proton gradient. This is NADH-quinone oxidoreductase subunit D from Rhodopseudomonas palustris (strain BisB18).